The primary structure comprises 76 residues: uncharacterized protein (76 aa).

Residues 1–22 form the signal peptide; sequence MFTKALSVVLLTCALFSGQLMA.

This is an uncharacterized protein from Escherichia coli O157:H7.